Reading from the N-terminus, the 438-residue chain is Glycogen synthase (438 aa).

Lys-16 is a binding site for ADP-alpha-D-glucose.

Belongs to the glycosyltransferase 1 family. Bacterial/plant glycogen synthase subfamily.

It catalyses the reaction [(1-&gt;4)-alpha-D-glucosyl](n) + ADP-alpha-D-glucose = [(1-&gt;4)-alpha-D-glucosyl](n+1) + ADP + H(+). It functions in the pathway glycan biosynthesis; glycogen biosynthesis. Functionally, synthesizes alpha-1,4-glucan chains using ADP-glucose. In Thermus caldophilus, this protein is Glycogen synthase.